Reading from the N-terminus, the 434-residue chain is NADH-quinone oxidoreductase subunit F 1 (434 aa).

54–63 (GRGGAGFPTG) serves as a coordination point for NAD(+). 166-213 (GAGAYICGEETALLESLEGKKGQPRLKPPFPANMGLYGCPTTVNNVES) serves as a coordination point for FMN. [4Fe-4S] cluster contacts are provided by Cys345, Cys348, Cys351, and Cys391.

Belongs to the complex I 51 kDa subunit family. The cofactor is FMN. Requires [4Fe-4S] cluster as cofactor.

It carries out the reaction a quinone + NADH + 5 H(+)(in) = a quinol + NAD(+) + 4 H(+)(out). NDH-1 shuttles electrons from NADH, via FMN and iron-sulfur (Fe-S) centers, to quinones in the respiratory chain. The immediate electron acceptor for the enzyme in this species is believed to be ubiquinone. Couples the redox reaction to proton translocation (for every two electrons transferred, four hydrogen ions are translocated across the cytoplasmic membrane), and thus conserves the redox energy in a proton gradient. This Rhizobium meliloti (strain 1021) (Ensifer meliloti) protein is NADH-quinone oxidoreductase subunit F 1 (nuoF1).